The sequence spans 126 residues: MSWQAYTDNLIGTGKVDKAVIYSRAGDAVWATSGGLSLQPNEIGEIVQGFDNPAGLQSNGLHIQGQKFMLLRADDRSIYGRHDAEGVVCVRTKQTVIIAHYPPTVQAGEATKIVEQLADYLIGVQY.

This sequence belongs to the profilin family. In terms of assembly, occurs in many kinds of cells as a complex with monomeric actin in a 1:1 ratio.

It is found in the cytoplasm. Its subcellular location is the cytoskeleton. Binds to actin and affects the structure of the cytoskeleton. At high concentrations, profilin prevents the polymerization of actin, whereas it enhances it at low concentrations. By binding to PIP2, it inhibits the formation of IP3 and DG. The sequence is that of Profilin (PFY1) from Saccharomyces cerevisiae (strain ATCC 204508 / S288c) (Baker's yeast).